We begin with the raw amino-acid sequence, 534 residues long: MTKYIFVTGGVVSSIGKGIVAASLGRLLKNRGLKVTIQKFDPYINIDPGTMSPYQHGEVYVTDDGAETDLDLGHYERFIDINLNKYSNVTTGKIYSEVLRKERKGEYLGATVQVIPHITDALKEKIKRAASTTDSDVIITEVGGTVGDIESLPFLEALRQMKADVGSENVMYIHTTLLPYLKAAGEMKTKPTQHSVKELRGLGIQPNMLVIRTEEPVEQGIKNKLAQFCDVNSEAVIESRDVEHLYQIPLNLQAQSMDQIVCDHLKLNAPQADMTEWSAMVDKVMNLRKTTKIALVGKYVELPDAYLSVVEALKHSGYANDTAIDLKWVNANDVTVDNAADLLGDADGIIVPGGFGQRGTEGKIQAIRYARENDVPMLGICLGMQLTCVEFARHVLNMEGANSFELEPSTKYPIIDIMRDQIDIEDMGGTLRLGLYPCKLKPGSKAAMAYNNQEVVQRRHRHRYEFNNKFRSEFEAAGFVFSGVSPDNRLVEIVELKEKKFFVAAQYHPELQSRPNRPEELYTAFVTAAIKNSN.

Positions 1-267 are amidoligase domain; it reads MTKYIFVTGG…DQIVCDHLKL (267 aa). Ser13 is a CTP binding site. Ser13 provides a ligand contact to UTP. Residue 14–19 participates in ATP binding; sequence SIGKGI. Residue Tyr54 participates in L-glutamine binding. Position 71 (Asp71) interacts with ATP. The Mg(2+) site is built by Asp71 and Glu141. CTP contacts are provided by residues 148 to 150, 188 to 193, and Lys224; these read DIE and KTKPTQ. Residues 188–193 and Lys224 each bind UTP; that span reads KTKPTQ. Position 240–242 (240–242) interacts with ATP; that stretch reads RDV. In terms of domain architecture, Glutamine amidotransferase type-1 spans 292-534; that stretch reads KIALVGKYVE…FVTAAIKNSN (243 aa). Gly354 contacts L-glutamine. The active-site Nucleophile; for glutamine hydrolysis is Cys381. Residues 382-385, Glu405, and Arg463 each bind L-glutamine; that span reads LGMQ. Catalysis depends on residues His508 and Glu510.

It belongs to the CTP synthase family. As to quaternary structure, homotetramer.

It catalyses the reaction UTP + L-glutamine + ATP + H2O = CTP + L-glutamate + ADP + phosphate + 2 H(+). It carries out the reaction L-glutamine + H2O = L-glutamate + NH4(+). The enzyme catalyses UTP + NH4(+) + ATP = CTP + ADP + phosphate + 2 H(+). The protein operates within pyrimidine metabolism; CTP biosynthesis via de novo pathway; CTP from UDP: step 2/2. Its activity is regulated as follows. Allosterically activated by GTP, when glutamine is the substrate; GTP has no effect on the reaction when ammonia is the substrate. The allosteric effector GTP functions by stabilizing the protein conformation that binds the tetrahedral intermediate(s) formed during glutamine hydrolysis. Inhibited by the product CTP, via allosteric rather than competitive inhibition. In terms of biological role, catalyzes the ATP-dependent amination of UTP to CTP with either L-glutamine or ammonia as the source of nitrogen. Regulates intracellular CTP levels through interactions with the four ribonucleotide triphosphates. The polypeptide is CTP synthase (Streptococcus pyogenes serotype M4 (strain MGAS10750)).